Reading from the N-terminus, the 422-residue chain is Phospholipase D Z (422 aa).

The N-terminal stretch at 1-18 (MMMKLLFLIALFGCVVNS) is a signal peptide. N53 carries an N-linked (GlcNAc...) asparagine glycan. Residues 148–175 (GAGILHTKVIVVDQVSAYLGSANLDWRS) form the PLD phosphodiesterase 1 domain. Catalysis depends on residues H153, K155, and D160. N-linked (GlcNAc...) asparagine glycosylation is found at N225 and N320. Residues 357–383 (FTRVNHAKYMVTDEQSYVGTSNWSEDY) form the PLD phosphodiesterase 2 domain. Catalysis depends on residues H362, K364, and D369. An N-linked (GlcNAc...) asparagine glycan is attached at N378.

Belongs to the phospholipase D family.

The catalysed reaction is a 1,2-diacyl-sn-glycero-3-phosphocholine + H2O = a 1,2-diacyl-sn-glycero-3-phosphate + choline + H(+). With respect to regulation, inhibited by butan-1-ol. Hydrolyzes membrane phospholipids, such as PtdCho (phosphatidylcholine), producing the free headgroup and PtdOH (phosphatidic acid; signaling molecule on its own). The sequence is that of Phospholipase D Z (pldZ) from Dictyostelium discoideum (Social amoeba).